A 102-amino-acid chain; its full sequence is Hemoglobin subunit beta-Z (102 aa).

One can recognise a Globin domain in the interval 1 to 102; sequence FGNLSSAQAI…VANALSHKYH (102 aa). Residues histidine 19 and histidine 48 each contribute to the heme b site.

This sequence belongs to the globin family. In terms of assembly, heterotetramer of two alpha chains and two beta chains.

This is an embryonic beta chain. This is Hemoglobin subunit beta-Z (HBBZ) from Mesocricetus auratus (Golden hamster).